Reading from the N-terminus, the 361-residue chain is S-adenosylmethionine:tRNA ribosyltransferase-isomerase (361 aa).

The protein belongs to the QueA family. In terms of assembly, monomer.

The protein localises to the cytoplasm. It catalyses the reaction 7-aminomethyl-7-carbaguanosine(34) in tRNA + S-adenosyl-L-methionine = epoxyqueuosine(34) in tRNA + adenine + L-methionine + 2 H(+). It participates in tRNA modification; tRNA-queuosine biosynthesis. Functionally, transfers and isomerizes the ribose moiety from AdoMet to the 7-aminomethyl group of 7-deazaguanine (preQ1-tRNA) to give epoxyqueuosine (oQ-tRNA). The protein is S-adenosylmethionine:tRNA ribosyltransferase-isomerase of Rhizobium johnstonii (strain DSM 114642 / LMG 32736 / 3841) (Rhizobium leguminosarum bv. viciae).